Reading from the N-terminus, the 328-residue chain is Ferredoxin--NADP reductase (328 aa).

E34, Q42, Y47, V87, F120, D283, and T323 together coordinate FAD.

This sequence belongs to the ferredoxin--NADP reductase type 2 family. In terms of assembly, homodimer. FAD serves as cofactor.

It catalyses the reaction 2 reduced [2Fe-2S]-[ferredoxin] + NADP(+) + H(+) = 2 oxidized [2Fe-2S]-[ferredoxin] + NADPH. The polypeptide is Ferredoxin--NADP reductase (Pediococcus pentosaceus (strain ATCC 25745 / CCUG 21536 / LMG 10740 / 183-1w)).